The following is a 143-amino-acid chain: Nucleoside diphosphate kinase (143 aa).

Residues lysine 11, phenylalanine 59, arginine 87, threonine 93, arginine 104, and asparagine 114 each coordinate ATP. The Pros-phosphohistidine intermediate role is filled by histidine 117.

This sequence belongs to the NDK family. Homotetramer. Requires Mg(2+) as cofactor.

It localises to the cytoplasm. The catalysed reaction is a 2'-deoxyribonucleoside 5'-diphosphate + ATP = a 2'-deoxyribonucleoside 5'-triphosphate + ADP. It carries out the reaction a ribonucleoside 5'-diphosphate + ATP = a ribonucleoside 5'-triphosphate + ADP. Major role in the synthesis of nucleoside triphosphates other than ATP. The ATP gamma phosphate is transferred to the NDP beta phosphate via a ping-pong mechanism, using a phosphorylated active-site intermediate. The chain is Nucleoside diphosphate kinase from Pseudomonas aeruginosa (strain UCBPP-PA14).